The chain runs to 274 residues: Lipid phosphate phosphatase 1 (274 aa).

Over 1–15 (MISVMADEKHKEYFK) the chain is Lumenal. A helical transmembrane segment spans residues 16–33 (LYYFQYMIIGLCTILFLY). Residues 34–69 (SEISLVPRGQNIEFSLDDPSISKRYVPNELVGPLEC) are Cytoplasmic-facing. Residues 70–87 (LILSVGLSNMVVFWTCMF) traverse the membrane as a helical segment. At 88–117 (DKDLLKKNRVKRLRERPDGISNDFHFMHTS) the chain is on the lumenal side. Residues 118 to 139 (ILCLMLIISINAALTGALKLII) traverse the membrane as a helical segment. Residues 136–144 (KLIIGNLRP) form a phosphatase sequence motif I region. Residues 140–189 (GNLRPDFVDRCIPDLQKMSDSDSLVFGLDICKQTNKWILYEGLKSTPSGH) are Cytoplasmic-facing. Positions 186 to 189 (PSGH) are phosphatase sequence motif II. Residues 190–203 (SSFIVSTMGFTYLW) traverse the membrane as a helical segment. Over 204-214 (QRVFTTRNTRS) the chain is Lumenal. A helical transmembrane segment spans residues 215 to 231 (CIWCPLLALVVMVSRVI). The interval 228–239 (SRVIDHRHHWYD) is phosphatase sequence motif III. The Cytoplasmic segment spans residues 232 to 237 (DHRHHW). The chain crosses the membrane as a helical span at residues 238-255 (YDVVSGAVLAFLVIYCCW). At 256 to 274 (KWTFTNLAKRDILPSPVSV) the chain is on the lumenal side.

The protein belongs to the PA-phosphatase related phosphoesterase family.

It localises to the golgi apparatus membrane. The enzyme catalyses a 1,2-diacyl-sn-glycerol 3-diphosphate + H2O = a 1,2-diacyl-sn-glycero-3-phosphate + phosphate + H(+). It catalyses the reaction a 1,2-diacyl-sn-glycero-3-phosphate + H2O = a 1,2-diacyl-sn-glycerol + phosphate. The catalysed reaction is a 1-acyl-sn-glycero-3-phosphate + H2O = a 1-acyl-sn-glycerol + phosphate. PA phosphatase activity is magnesium ion-independent and potently inhibited by N-ethylmaleimide. Also inhibited by phenylglyoxal and propranolol. Functionally, catalyzes the dephosphorylation of diacylglycerol diphosphate (DGPP) to phosphatidate (PA) and the subsequent dephosphorylation of PA to diacylglycerol (DAG). Together with DPP1, regulates intracellular DGPP and PA levels which are phospholipid molecules believed to play a signaling role in stress response. Can also use lysophosphatidic acid (LPA) as a substrate. Substrate preference is PA &gt; DGPP &gt; LPA. The chain is Lipid phosphate phosphatase 1 (LPP1) from Saccharomyces cerevisiae (strain ATCC 204508 / S288c) (Baker's yeast).